Here is a 628-residue protein sequence, read N- to C-terminus: Chaperone protein HtpG (628 aa).

Residues 1 to 337 (MSEKKYTFET…SADLPLNVSR (337 aa)) are a; substrate-binding. A b region spans residues 338–554 (EILQHNKVID…DYGMSLHMQK (217 aa)). Residues 555 to 628 (MMEEAGQSFM…FVKLVNKYIR (74 aa)) form a c region.

It belongs to the heat shock protein 90 family. Homodimer.

The protein localises to the cytoplasm. Molecular chaperone. Has ATPase activity. In Francisella tularensis subsp. tularensis (strain FSC 198), this protein is Chaperone protein HtpG.